A 489-amino-acid polypeptide reads, in one-letter code: UDP-glycosyltransferase 85A1 (489 aa).

Residues S307, 364–366 (CPQ), 381–389 (HCGWNSILE), and 403–406 (FADQ) contribute to the UDP-alpha-D-glucose site.

It belongs to the UDP-glycosyltransferase family. As to expression, expressed in root tips, lateral root initials, root apex, shoots, leaf periphery, leaf primordia and flowers.

Functionally, involved in the O-glucosylation of trans-zeatin and dihydrozeatin. Also active in vitro on cis-zeatin. Not active on N-glucosylated substrates. The sequence is that of UDP-glycosyltransferase 85A1 (UGT85A1) from Arabidopsis thaliana (Mouse-ear cress).